The following is a 389-amino-acid chain: Gustatory receptor for bitter taste 22e (389 aa).

The Cytoplasmic segment spans residues 1 to 14 (MFRPSGSGYRQKWT). A helical transmembrane segment spans residues 15–35 (GLTLKGALYGSWILGVFPFAY). The Extracellular segment spans residues 36 to 46 (DSWTRTLRRSK). The helical transmembrane segment at 47 to 67 (WLIAYGFVLNAAFILLVVTND) threads the bilayer. Topologically, residues 68-142 (TESETPLRME…SLEECISFDR (75 aa)) are cytoplasmic. Residues 143–163 (FVLYKGFSVVLELVSMLVLEL) traverse the membrane as a helical segment. Over 164 to 170 (GMSPNYS) the chain is Extracellular. Residue Asn-168 is glycosylated (N-linked (GlcNAc...) asparagine). Residues 171-191 (AQFFIGLGSLCLMLLAVLLGA) traverse the membrane as a helical segment. The Cytoplasmic portion of the chain corresponds to 192 to 254 (SHFHLAVVFV…QRLASIYDYQ (63 aa)). The chain crosses the membrane as a helical span at residues 255–275 (MVMVMVSFLIANVLGIYFFII). The Extracellular segment spans residues 276–287 (YSISLNKSLDFK). A glycan (N-linked (GlcNAc...) asparagine) is linked at Asn-281. A helical membrane pass occupies residues 288 to 308 (ILVFVQALVINMLDFWLNVEI). Residues 309–366 (CELAERTGRQTSTILKLFNDIENIDEKLERSITDFALFCSHRRLRFHHCGLFYVNYEM) are Cytoplasmic-facing. Residues 367 to 387 (GFRMAITSFLYLLFLIQFDYW) form a helical membrane-spanning segment. The Extracellular portion of the chain corresponds to 388–389 (NL).

The protein belongs to the insect chemoreceptor superfamily. Gustatory receptor (GR) family. Gr22e subfamily. As to expression, taste bristles on the labial palp, labral and cibarial sense organs, chemosensory bristles on the leg and anterior wing margin. In larvae, is expressed in neurons of the terminal external chemosensory organ and in the dorsal pharyngeal sense organ. Neurons expressing Gr22e also express Gr66a and correspond to taste neurons that mediate sensitivity to bitter compounds.

It localises to the cell membrane. Gustatory receptor which mediates acceptance or avoidance behavior, depending on its substrates. Seems to be involved in the sensing of bitter taste since it is expressed in neurons that mediate sensitivity to bitter compounds which are also avoidance-type taste neurons. The chain is Gustatory receptor for bitter taste 22e (Gr22e) from Drosophila melanogaster (Fruit fly).